A 255-amino-acid chain; its full sequence is CD320 antigen (255 aa).

Residues 1-29 (MNGWVARGLARRAAALGLGLRVLLCFGLC) form the signal peptide. Over 30-203 (LEIAPTPIQT…SVQSGNRNVY (174 aa)) the chain is Extracellular. LDL-receptor class A domains are found at residues 52–89 (SCPP…EECG) and 120–157 (SCPE…LGCG). Cystine bridges form between Cys-53–Cys-66, Cys-60–Cys-79, Cys-73–Cys-88, Cys-121–Cys-134, Cys-128–Cys-147, and Cys-141–Cys-156. Residues Trp-71, Asp-74, Asp-76, Asp-78, Asp-84, and Glu-85 each contribute to the Ca(2+) site. The Ca(2+) site is built by Trp-139, Asp-142, His-144, Asp-146, Asp-152, and Glu-153. N-linked (GlcNAc...) asparagine glycosylation is found at Asn-177 and Asn-183. A helical membrane pass occupies residues 204-224 (GIIAAVAVLSISLAAGILFAL). Residues 225–255 (SRLCAQGCLAPLGLLVSMKGSLQPEKKTSVL) are Cytoplasmic-facing.

Interacts (via LDL-receptor class A domains) with TCN2.

The protein localises to the cell membrane. In terms of biological role, receptor for transcobalamin saturated with cobalamin (TCbl). Plays an important role in cobalamin uptake. Plasma membrane protein that is expressed on follicular dendritic cells (FDC) and mediates interaction with germinal center B cells. Functions as a costimulator to promote B cell responses to antigenic stimuli; promotes B cell differentiation and proliferation. Germinal center-B (GC-B) cells differentiate into memory B-cells and plasma cells (PC) through interaction with T-cells and follicular dendritic cells (FDC). CD320 augments the proliferation of PC precursors generated by IL-10. This is CD320 antigen (CD320) from Bos taurus (Bovine).